Consider the following 580-residue polypeptide: Multidrug resistance-like ATP-binding protein MdlB (580 aa).

An ABC transmembrane type-1 domain is found at 25 to 310 (IILAFFLLLS…ITIQQSILQQ (286 aa)). The next 5 helical transmembrane spans lie at 26–46 (ILAF…PILI), 61–81 (FQLI…AVFF), 142–162 (VGPT…AMFT), 165–185 (WHMA…MSIY), and 258–278 (LLSA…SIGV). The 235-residue stretch at 341 to 575 (INIKNLSFKY…KGFYWKMYNF (235 aa)) folds into the ABC transporter domain. An ATP-binding site is contributed by 375 to 382 (GQTGSGKS).

This sequence belongs to the ABC transporter superfamily. Drug exporter-2 (TC 3.A.1.117) family.

The protein localises to the cell membrane. It catalyses the reaction ATP + H2O + xenobioticSide 1 = ADP + phosphate + xenobioticSide 2.. The chain is Multidrug resistance-like ATP-binding protein MdlB (mdlB) from Buchnera aphidicola subsp. Schizaphis graminum (strain Sg).